We begin with the raw amino-acid sequence, 864 residues long: Leucine--tRNA ligase (864 aa).

A 'HIGH' region motif is present at residues 42–52 (PYPSGKLHMGH). The 'KMSKS' region signature appears at 622 to 626 (KMSKS). Residue lysine 625 participates in ATP binding.

This sequence belongs to the class-I aminoacyl-tRNA synthetase family.

Its subcellular location is the cytoplasm. The catalysed reaction is tRNA(Leu) + L-leucine + ATP = L-leucyl-tRNA(Leu) + AMP + diphosphate. This is Leucine--tRNA ligase from Cellvibrio japonicus (strain Ueda107) (Pseudomonas fluorescens subsp. cellulosa).